We begin with the raw amino-acid sequence, 339 residues long: Oncoprotein MEQ (339 aa).

The segment at 1–80 (MSQEPEPGAM…ARRRRRKQTD (80 aa)) is disordered. Ser42 carries the phosphoserine; by host CDK2 modification. A basic motif region spans residues 57–84 (KQKLERRRKRNRDAARRRRRKQTDYVDK). Positions 57 to 120 (KQKLERRRKR…TSLRVQLACH (64 aa)) constitute a bZIP domain. A compositionally biased stretch (basic residues) spans 60 to 77 (LERRRKRNRDAARRRRRK). The Nuclear localization signal motif lies at 62-78 (RRRKRNRDAARRRRRKQ). The segment at 85-113 (LHEACEELQRANEHLRKEIRDLRTECTSL) is leucine-zipper. Residues 120-339 (HEPVCPMAVP…VWWFPGDGRP (220 aa)) are transactivation domain. A compositionally biased stretch (pro residues) spans 145-160 (PEPPICTPPPPSPDEP). Positions 145-172 (PEPPICTPPPPSPDEPNAPHCSGSQPPI) are disordered.

This sequence belongs to the bZIP family. Jun subfamily. As to quaternary structure, homodimer. Interacts with host JUN; this interaction allows MEQ to engage in host cell processes by disguising itself as a cellular JUN. In terms of processing, phosphorylated by host CDK2; this phosphorylation greatly reduces the DNA binding activity of MEQ.

The protein localises to the host nucleus. It is found in the host nucleolus. In terms of biological role, functions as a DNA-binding transcription factor. Promotes transformation, host cell growth, host cell-cycle progression through G1/S phase, and possesses antiapoptotic activity. Forms functional heterodimers with host JUN. These heterodimers bind with high affinity DNA sequences called MEQ-responsive elements MERE I (TGACA/GTCA), while MEQ homodimers bind a second type of sites termed MERE II (ACACA). Both homo and heterodimerization of MEQ are required for oncogenesis. The polypeptide is Oncoprotein MEQ (MDV005) (Gallid herpesvirus 2 (strain Chicken/Md5/ATCC VR-987) (GaHV-2)).